The primary structure comprises 322 residues: Acetyl-coenzyme A carboxylase carboxyl transferase subunit alpha 2 (322 aa).

In terms of domain architecture, CoA carboxyltransferase C-terminal spans 37-294 (EINRLSARSE…KRVLQESLRN (258 aa)).

It belongs to the AccA family. As to quaternary structure, acetyl-CoA carboxylase is a heterohexamer composed of biotin carboxyl carrier protein (AccB), biotin carboxylase (AccC) and two subunits each of ACCase subunit alpha (AccA) and ACCase subunit beta (AccD).

Its subcellular location is the cytoplasm. It catalyses the reaction N(6)-carboxybiotinyl-L-lysyl-[protein] + acetyl-CoA = N(6)-biotinyl-L-lysyl-[protein] + malonyl-CoA. Its pathway is lipid metabolism; malonyl-CoA biosynthesis; malonyl-CoA from acetyl-CoA: step 1/1. Functionally, component of the acetyl coenzyme A carboxylase (ACC) complex. First, biotin carboxylase catalyzes the carboxylation of biotin on its carrier protein (BCCP) and then the CO(2) group is transferred by the carboxyltransferase to acetyl-CoA to form malonyl-CoA. In terms of biological role, confers resistance to the endogenous polyketide antibiotic thailandamide. Can replace the endogenous gene in S.typhimurium, conferring slow growth and resistance to thailandamide. Can also replace the endogenous gene in E.coli, conferring resistance to thailandamide. In Burkholderia thailandensis (strain ATCC 700388 / DSM 13276 / CCUG 48851 / CIP 106301 / E264), this protein is Acetyl-coenzyme A carboxylase carboxyl transferase subunit alpha 2.